A 218-amino-acid chain; its full sequence is Protein GrpE (218 aa).

2 stretches are compositionally biased toward basic and acidic residues: residues 1-13 (MSKN…HQNN) and 20-32 (VDKK…NKQE). Positions 1-32 (MSKNNENIKHQNNDKVNNQVDKKETKNHNKQE) are disordered.

It belongs to the GrpE family. As to quaternary structure, homodimer.

It is found in the cytoplasm. Functionally, participates actively in the response to hyperosmotic and heat shock by preventing the aggregation of stress-denatured proteins, in association with DnaK and GrpE. It is the nucleotide exchange factor for DnaK and may function as a thermosensor. Unfolded proteins bind initially to DnaJ; upon interaction with the DnaJ-bound protein, DnaK hydrolyzes its bound ATP, resulting in the formation of a stable complex. GrpE releases ADP from DnaK; ATP binding to DnaK triggers the release of the substrate protein, thus completing the reaction cycle. Several rounds of ATP-dependent interactions between DnaJ, DnaK and GrpE are required for fully efficient folding. The sequence is that of Protein GrpE from Ureaplasma parvum serovar 3 (strain ATCC 27815 / 27 / NCTC 11736).